A 101-amino-acid polypeptide reads, in one-letter code: Large ribosomal subunit protein uL24 (101 aa).

The protein belongs to the universal ribosomal protein uL24 family. As to quaternary structure, part of the 50S ribosomal subunit.

In terms of biological role, one of two assembly initiator proteins, it binds directly to the 5'-end of the 23S rRNA, where it nucleates assembly of the 50S subunit. Its function is as follows. One of the proteins that surrounds the polypeptide exit tunnel on the outside of the subunit. In Lactococcus lactis subsp. lactis (strain IL1403) (Streptococcus lactis), this protein is Large ribosomal subunit protein uL24.